We begin with the raw amino-acid sequence, 119 residues long: MTLEAYFPVLIFIIFGVVLGIALMSIGRILGPNKPDPAKLSPYECGFEAFEDARMKFDVRYYLIAILFILFDLETAFLFPWGVALREIGWPGFIAMGVFLLEFIVGFVYIWKKGALDWE.

The next 3 membrane-spanning stretches (helical) occupy residues 7–27, 63–83, and 88–108; these read FPVL…MSIG, LIAI…PWGV, and IGWP…VGFV.

Belongs to the complex I subunit 3 family. NDH-1 is composed of 14 different subunits. Subunits NuoA, H, J, K, L, M, N constitute the membrane sector of the complex.

Its subcellular location is the cell inner membrane. It carries out the reaction a quinone + NADH + 5 H(+)(in) = a quinol + NAD(+) + 4 H(+)(out). In terms of biological role, NDH-1 shuttles electrons from NADH, via FMN and iron-sulfur (Fe-S) centers, to quinones in the respiratory chain. The immediate electron acceptor for the enzyme in this species is believed to be ubiquinone. Couples the redox reaction to proton translocation (for every two electrons transferred, four hydrogen ions are translocated across the cytoplasmic membrane), and thus conserves the redox energy in a proton gradient. This Cupriavidus pinatubonensis (strain JMP 134 / LMG 1197) (Cupriavidus necator (strain JMP 134)) protein is NADH-quinone oxidoreductase subunit A.